Reading from the N-terminus, the 340-residue chain is Heat-inducible transcription repressor HrcA (340 aa).

It belongs to the HrcA family.

In terms of biological role, negative regulator of class I heat shock genes (grpE-dnaK-dnaJ and groELS operons). Prevents heat-shock induction of these operons. The protein is Heat-inducible transcription repressor HrcA of Clavibacter michiganensis subsp. michiganensis (strain NCPPB 382).